Consider the following 419-residue polypeptide: Enolase (419 aa).

Gln161 serves as a coordination point for (2R)-2-phosphoglycerate. Residue Glu205 is the Proton donor of the active site. Positions 240, 283, and 309 each coordinate Mg(2+). The (2R)-2-phosphoglycerate site is built by Lys334, Arg363, Ser364, and Lys385. The active-site Proton acceptor is the Lys334.

It belongs to the enolase family. Requires Mg(2+) as cofactor.

It localises to the cytoplasm. Its subcellular location is the secreted. The protein resides in the cell surface. It carries out the reaction (2R)-2-phosphoglycerate = phosphoenolpyruvate + H2O. It functions in the pathway carbohydrate degradation; glycolysis; pyruvate from D-glyceraldehyde 3-phosphate: step 4/5. In terms of biological role, catalyzes the reversible conversion of 2-phosphoglycerate (2-PG) into phosphoenolpyruvate (PEP). It is essential for the degradation of carbohydrates via glycolysis. The chain is Enolase from Saccharolobus islandicus (strain Y.N.15.51 / Yellowstone #2) (Sulfolobus islandicus).